A 252-amino-acid chain; its full sequence is Hydroxyacylglutathione hydrolase (252 aa).

Histidine 54, histidine 56, aspartate 58, histidine 59, histidine 111, aspartate 130, and histidine 170 together coordinate Zn(2+).

This sequence belongs to the metallo-beta-lactamase superfamily. Glyoxalase II family. As to quaternary structure, monomer. It depends on Zn(2+) as a cofactor.

It catalyses the reaction an S-(2-hydroxyacyl)glutathione + H2O = a 2-hydroxy carboxylate + glutathione + H(+). It functions in the pathway secondary metabolite metabolism; methylglyoxal degradation; (R)-lactate from methylglyoxal: step 2/2. Functionally, thiolesterase that catalyzes the hydrolysis of S-D-lactoyl-glutathione to form glutathione and D-lactic acid. The chain is Hydroxyacylglutathione hydrolase from Francisella tularensis subsp. holarctica (strain FTNF002-00 / FTA).